A 266-amino-acid polypeptide reads, in one-letter code: Isopentenyl phosphate kinase (266 aa).

Residue Lys-5 to Ser-9 coordinates ATP. Position 47 (Ala-47) interacts with substrate. Gly-48 lines the ATP pocket. Residues His-52 and Gly-157 each coordinate substrate. Residues Asp-178, Tyr-183 to Lys-188, Gly-219, and Lys-223 contribute to the ATP site.

The protein belongs to the isopentenyl phosphate kinase family. As to quaternary structure, homodimer.

It catalyses the reaction isopentenyl phosphate + ATP = isopentenyl diphosphate + ADP. In terms of biological role, catalyzes the formation of isopentenyl diphosphate (IPP), the building block of all isoprenoids. Has lower activity with dimethylallyl phosphate (DMAP) and isopentenyl thiolophosphate (ISP). Has low activity with 1-butyl phosphate (BP) and 3-buten-1-yl phosphate (BEP). Has no significant activity with geranyl phosphate (in vitro). This chain is Isopentenyl phosphate kinase, found in Methanothermobacter thermautotrophicus (strain ATCC 29096 / DSM 1053 / JCM 10044 / NBRC 100330 / Delta H) (Methanobacterium thermoautotrophicum).